A 129-amino-acid polypeptide reads, in one-letter code: Small ribosomal subunit protein uS11 (129 aa).

Belongs to the universal ribosomal protein uS11 family. Part of the 30S ribosomal subunit. Interacts with proteins S7 and S18. Binds to IF-3.

In terms of biological role, located on the platform of the 30S subunit, it bridges several disparate RNA helices of the 16S rRNA. Forms part of the Shine-Dalgarno cleft in the 70S ribosome. In Bacillus cereus (strain G9842), this protein is Small ribosomal subunit protein uS11.